The following is a 210-amino-acid chain: Cuticle collagen 2C (210 aa).

Residues 11-210 are disordered; it reads CTGGQAGPPG…GVFFEDGTRR (200 aa). Composition is skewed to pro residues over residues 40 to 76 and 88 to 103; these read PGRP…PGEP and DAPP…PGPP. A compositionally biased stretch (low complexity) spans 105–122; the sequence is KAGAPGAAGQPGANAPSE. The span at 123–144 shows a compositional bias: pro residues; the sequence is PLVPGPPGPPGPTGPEGPPGPN. Low complexity predominate over residues 167–179; the sequence is HPGAPGNAGHPGQ.

This sequence belongs to the cuticular collagen family.

In terms of biological role, nematode cuticles are composed largely of collagen-like proteins. The cuticle functions both as an exoskeleton and as a barrier to protect the worm from its environment. The protein is Cuticle collagen 2C (2C) of Haemonchus contortus (Barber pole worm).